A 225-amino-acid polypeptide reads, in one-letter code: NAD(P)H-quinone oxidoreductase subunit K, chloroplastic (225 aa).

Positions 43, 44, 108, and 139 each coordinate [4Fe-4S] cluster.

It belongs to the complex I 20 kDa subunit family. As to quaternary structure, NDH is composed of at least 16 different subunits, 5 of which are encoded in the nucleus. It depends on [4Fe-4S] cluster as a cofactor.

It is found in the plastid. Its subcellular location is the chloroplast thylakoid membrane. The catalysed reaction is a plastoquinone + NADH + (n+1) H(+)(in) = a plastoquinol + NAD(+) + n H(+)(out). It catalyses the reaction a plastoquinone + NADPH + (n+1) H(+)(in) = a plastoquinol + NADP(+) + n H(+)(out). Functionally, NDH shuttles electrons from NAD(P)H:plastoquinone, via FMN and iron-sulfur (Fe-S) centers, to quinones in the photosynthetic chain and possibly in a chloroplast respiratory chain. The immediate electron acceptor for the enzyme in this species is believed to be plastoquinone. Couples the redox reaction to proton translocation, and thus conserves the redox energy in a proton gradient. In Oenothera argillicola (Appalachian evening primrose), this protein is NAD(P)H-quinone oxidoreductase subunit K, chloroplastic.